The following is a 512-amino-acid chain: D-alanine--D-alanyl carrier protein ligase (512 aa).

152–153 contacts ATP; it reads TS. D199 lines the D-alanine pocket. 294-299 is an ATP binding site; the sequence is NAYGPT. V303 is a binding site for D-alanine. ATP is bound by residues D385, 397–400, and K499; that span reads YGGR. Position 499 (K499) interacts with D-alanine.

It belongs to the ATP-dependent AMP-binding enzyme family. DltA subfamily.

The protein localises to the cytoplasm. The enzyme catalyses holo-[D-alanyl-carrier protein] + D-alanine + ATP = D-alanyl-[D-alanyl-carrier protein] + AMP + diphosphate. It participates in cell wall biogenesis; lipoteichoic acid biosynthesis. Its function is as follows. Catalyzes the first step in the D-alanylation of lipoteichoic acid (LTA), the activation of D-alanine and its transfer onto the D-alanyl carrier protein (Dcp) DltC. In an ATP-dependent two-step reaction, forms a high energy D-alanyl-AMP intermediate, followed by transfer of the D-alanyl residue as a thiol ester to the phosphopantheinyl prosthetic group of the Dcp. D-alanylation of LTA plays an important role in modulating the properties of the cell wall in Gram-positive bacteria, influencing the net charge of the cell wall. This is D-alanine--D-alanyl carrier protein ligase from Streptococcus pyogenes serotype M3 (strain SSI-1).